Reading from the N-terminus, the 492-residue chain is Homoserine O-acetyltransferase (492 aa).

Residues 47 to 352 (NAILVFHALS…KSIYGHDAFL (306 aa)) form the AB hydrolase-1 domain. Serine 152 functions as the Nucleophile in the catalytic mechanism. Arginine 221 is a binding site for substrate. Active-site residues include aspartate 315 and histidine 348. Aspartate 349 is a substrate binding site. 2 CBS domains span residues 375-431 (MTKN…ENSI) and 440-492 (MTKN…TITI).

Belongs to the AB hydrolase superfamily. MetX family. In terms of assembly, homodimer.

The protein localises to the cytoplasm. The catalysed reaction is L-homoserine + acetyl-CoA = O-acetyl-L-homoserine + CoA. It participates in amino-acid biosynthesis; L-methionine biosynthesis via de novo pathway; O-acetyl-L-homoserine from L-homoserine: step 1/1. In terms of biological role, transfers an acetyl group from acetyl-CoA to L-homoserine, forming acetyl-L-homoserine. The chain is Homoserine O-acetyltransferase from Methanococcus vannielii (strain ATCC 35089 / DSM 1224 / JCM 13029 / OCM 148 / SB).